The primary structure comprises 193 residues: PBAN-type neuropeptides (193 aa).

The signal sequence occupies residues 1–19 (MYGAVLPGLFFIFISCVVA). Isoleucine amide is present on isoleucine 46. Leucine 102 and leucine 122 each carry leucine amide. The tract at residues 124 to 158 (RRLADDTPATPADQEMYRPDPEQIDSRTKYFSPRL) is disordered. Residues 138-151 (EMYRPDPEQIDSRT) show a composition bias toward basic and acidic residues. Residues leucine 158 and leucine 168 each carry the leucine amide modification. Residues 186–193 (STNKTQST) constitute a propeptide that is removed on maturation.

It belongs to the pyrokinin family. In terms of tissue distribution, expressed in the mandibular, maxillary and labial neuromeres of the male and female brain-subesophageal ganglions, in the corpora cardiaca and all around the corpora allata, and at a lower level in the brain near the calyx and pedunculus of the mushroom body (at protein level). Expressed in larvae and adult of both sexes (at protein level). Expressed in corpora cardiaca (CC), corpora allata (CA) and gnathal ganglion (GNG) (at protein level). Expression in CC and CA detected in most animals, in GNG in some (at protein level). As to expression, expression not detected in CC, CA, AL or GNG (at protein level). In terms of tissue distribution, expressed in corpora cardiaca (CC), corpora allata (CA), antennal lobe (AL) and gnathal ganglion (GNG) (at protein level). Expression in CC, CA and GNG detected in most animals, expression in AL detected in few (at protein level). Expressed in corpora cardiaca (CC), corpora allata (CA), antennal lobe (AL) and gnathal ganglion (GNG) (at protein level). Expression in CC, CA and GNG detected in all animals, expression in AL detected in some (at protein level). As to expression, expressed in corpora cardiaca (CC), corpora allata (CA), antennal lobe (AL) and gnathal ganglion (GNG) (at protein level). Expression in CC, CA and GNG detected in most animals, expression in AL detected in some animals (at protein level).

Its subcellular location is the secreted. Its function is as follows. A hormone that controls sex pheromone production in female moths and pheromone responsiveness in male. The sequence is that of PBAN-type neuropeptides from Agrotis ipsilon (Black cutworm moth).